Here is a 361-residue protein sequence, read N- to C-terminus: Chorismate synthase (361 aa).

2 residues coordinate NADP(+): arginine 48 and arginine 54. Residues 125–127 (RSS), 238–239 (NA), glycine 278, 293–297 (KPTSS), and arginine 319 contribute to the FMN site.

Belongs to the chorismate synthase family. In terms of assembly, homotetramer. Requires FMNH2 as cofactor.

It catalyses the reaction 5-O-(1-carboxyvinyl)-3-phosphoshikimate = chorismate + phosphate. It functions in the pathway metabolic intermediate biosynthesis; chorismate biosynthesis; chorismate from D-erythrose 4-phosphate and phosphoenolpyruvate: step 7/7. In terms of biological role, catalyzes the anti-1,4-elimination of the C-3 phosphate and the C-6 proR hydrogen from 5-enolpyruvylshikimate-3-phosphate (EPSP) to yield chorismate, which is the branch point compound that serves as the starting substrate for the three terminal pathways of aromatic amino acid biosynthesis. This reaction introduces a second double bond into the aromatic ring system. The chain is Chorismate synthase from Vibrio parahaemolyticus serotype O3:K6 (strain RIMD 2210633).